A 305-amino-acid polypeptide reads, in one-letter code: MNLIEIETYLANASFALLLITMLIYGMKAIFTKNNILQLFGTLGILFSNFLVALLLSIRWFDSHHFPLSNMYESLMFLCWCFTFFHLLIEKYIQINFIGFITVPIAMLVNAFATFFLPLDMQHSTPLVPALKSNWLIMHVTIMMASYAALILGSLLSIAFLFLTYNKQIELQGNSIGNINDEMNSYITIDIEFQKNESIELAKLIDNLSYRTIGIGFPLLTIGIISGAVWANDAWGSYWSWDPKETWALITWIIFAIYLHTRITKGWQGRRPAIVAFIGFVIVWVCYLGVNLLGQGLHSYGWFTK.

The next 8 helical transmembrane spans lie at 11 to 31 (ANAS…KAIF), 36 to 56 (ILQL…ALLL), 75 to 95 (LMFL…YIQI), 97 to 117 (FIGF…TFFL), 142 to 162 (IMMA…AFLF), 212 to 232 (TIGI…VWAN), 239 to 259 (WSWD…AIYL), and 273 to 293 (AIVA…VNLL).

This sequence belongs to the CcmF/CycK/Ccl1/NrfE/CcsA family. As to quaternary structure, may interact with Ccs1.

The protein localises to the plastid. It is found in the chloroplast thylakoid membrane. Functionally, required during biogenesis of c-type cytochromes (cytochrome c6 and cytochrome f) at the step of heme attachment. This Mesostigma viride (Green alga) protein is Cytochrome c biogenesis protein CcsA.